The primary structure comprises 406 residues: Imidazolonepropionase (406 aa).

The Fe(3+) site is built by histidine 65 and histidine 67. Histidine 65 and histidine 67 together coordinate Zn(2+). Residues arginine 74, tyrosine 137, and histidine 170 each contribute to the 4-imidazolone-5-propanoate site. An N-formimidoyl-L-glutamate-binding site is contributed by tyrosine 137. Histidine 235 contacts Fe(3+). Histidine 235 provides a ligand contact to Zn(2+). A 4-imidazolone-5-propanoate-binding site is contributed by glutamine 238. Position 310 (aspartate 310) interacts with Fe(3+). Zn(2+) is bound at residue aspartate 310. N-formimidoyl-L-glutamate is bound by residues asparagine 312 and glycine 314. Threonine 315 contacts 4-imidazolone-5-propanoate.

This sequence belongs to the metallo-dependent hydrolases superfamily. HutI family. Requires Zn(2+) as cofactor. The cofactor is Fe(3+).

It localises to the cytoplasm. The enzyme catalyses 4-imidazolone-5-propanoate + H2O = N-formimidoyl-L-glutamate. It participates in amino-acid degradation; L-histidine degradation into L-glutamate; N-formimidoyl-L-glutamate from L-histidine: step 3/3. Catalyzes the hydrolytic cleavage of the carbon-nitrogen bond in imidazolone-5-propanoate to yield N-formimidoyl-L-glutamate. It is the third step in the universal histidine degradation pathway. The chain is Imidazolonepropionase from Vibrio vulnificus (strain CMCP6).